The following is a 185-amino-acid chain: Ribosome-recycling factor (185 aa).

Residues Asp-137 to Asp-166 are disordered.

The protein belongs to the RRF family.

It is found in the cytoplasm. Its function is as follows. Responsible for the release of ribosomes from messenger RNA at the termination of protein biosynthesis. May increase the efficiency of translation by recycling ribosomes from one round of translation to another. The protein is Ribosome-recycling factor of Agrobacterium fabrum (strain C58 / ATCC 33970) (Agrobacterium tumefaciens (strain C58)).